Reading from the N-terminus, the 418-residue chain is Serine hydroxymethyltransferase (418 aa).

(6S)-5,6,7,8-tetrahydrofolate contacts are provided by residues Leu121 and 125–127; that span reads GHL. Lys230 bears the N6-(pyridoxal phosphate)lysine mark. Residue 355–357 participates in (6S)-5,6,7,8-tetrahydrofolate binding; that stretch reads SPF.

The protein belongs to the SHMT family. As to quaternary structure, homodimer. It depends on pyridoxal 5'-phosphate as a cofactor.

Its subcellular location is the cytoplasm. It carries out the reaction (6R)-5,10-methylene-5,6,7,8-tetrahydrofolate + glycine + H2O = (6S)-5,6,7,8-tetrahydrofolate + L-serine. The protein operates within one-carbon metabolism; tetrahydrofolate interconversion. It participates in amino-acid biosynthesis; glycine biosynthesis; glycine from L-serine: step 1/1. Functionally, catalyzes the reversible interconversion of serine and glycine with tetrahydrofolate (THF) serving as the one-carbon carrier. This reaction serves as the major source of one-carbon groups required for the biosynthesis of purines, thymidylate, methionine, and other important biomolecules. Also exhibits THF-independent aldolase activity toward beta-hydroxyamino acids, producing glycine and aldehydes, via a retro-aldol mechanism. This chain is Serine hydroxymethyltransferase, found in Streptococcus pyogenes serotype M6 (strain ATCC BAA-946 / MGAS10394).